The chain runs to 197 residues: Phosphoheptose isomerase (197 aa).

In terms of domain architecture, SIS spans 36–197; the sequence is MVQCLVSEGK…IDQQLFGSTE (162 aa). 51-53 contributes to the substrate binding site; the sequence is NGG. 2 residues coordinate Zn(2+): H60 and E64. Residues E64, 93–94, 119–121, S124, and Q174 each bind substrate; these read ND and STS. Residues Q174 and H182 each contribute to the Zn(2+) site.

The protein belongs to the SIS family. GmhA subfamily. Homotetramer. The cofactor is Zn(2+).

It localises to the cytoplasm. It carries out the reaction 2 D-sedoheptulose 7-phosphate = D-glycero-alpha-D-manno-heptose 7-phosphate + D-glycero-beta-D-manno-heptose 7-phosphate. The protein operates within carbohydrate biosynthesis; D-glycero-D-manno-heptose 7-phosphate biosynthesis; D-glycero-alpha-D-manno-heptose 7-phosphate and D-glycero-beta-D-manno-heptose 7-phosphate from sedoheptulose 7-phosphate: step 1/1. In terms of biological role, catalyzes the isomerization of sedoheptulose 7-phosphate in D-glycero-D-manno-heptose 7-phosphate. This Chromohalobacter salexigens (strain ATCC BAA-138 / DSM 3043 / CIP 106854 / NCIMB 13768 / 1H11) protein is Phosphoheptose isomerase.